A 323-amino-acid chain; its full sequence is DNA-directed RNA polymerase subunit alpha (323 aa).

The alpha N-terminal domain (alpha-NTD) stretch occupies residues 1 to 225; it reads MLDIAMPKIE…QYSQTIADFN (225 aa). The tract at residues 243 to 323 is alpha C-terminal domain (alpha-CTD); sequence PADIYDTPIE…TNSSPAGIES (81 aa).

This sequence belongs to the RNA polymerase alpha chain family. As to quaternary structure, homodimer. The RNAP catalytic core consists of 2 alpha, 1 beta, 1 beta' and 1 omega subunit. When a sigma factor is associated with the core the holoenzyme is formed, which can initiate transcription.

It carries out the reaction RNA(n) + a ribonucleoside 5'-triphosphate = RNA(n+1) + diphosphate. Functionally, DNA-dependent RNA polymerase catalyzes the transcription of DNA into RNA using the four ribonucleoside triphosphates as substrates. The protein is DNA-directed RNA polymerase subunit alpha of Roseiflexus castenholzii (strain DSM 13941 / HLO8).